The primary structure comprises 442 residues: NADH-quinone oxidoreductase subunit D (442 aa).

It belongs to the complex I 49 kDa subunit family. In terms of assembly, NDH-1 is composed of 14 different subunits. Subunits NuoB, C, D, E, F, and G constitute the peripheral sector of the complex.

It localises to the cell membrane. It catalyses the reaction a quinone + NADH + 5 H(+)(in) = a quinol + NAD(+) + 4 H(+)(out). Functionally, NDH-1 shuttles electrons from NADH, via FMN and iron-sulfur (Fe-S) centers, to quinones in the respiratory chain. The immediate electron acceptor for the enzyme in this species is believed to be a menaquinone. Couples the redox reaction to proton translocation (for every two electrons transferred, four hydrogen ions are translocated across the cytoplasmic membrane), and thus conserves the redox energy in a proton gradient. The sequence is that of NADH-quinone oxidoreductase subunit D from Mycolicibacterium vanbaalenii (strain DSM 7251 / JCM 13017 / BCRC 16820 / KCTC 9966 / NRRL B-24157 / PYR-1) (Mycobacterium vanbaalenii).